A 227-amino-acid polypeptide reads, in one-letter code: 27 kDa glycoprotein (227 aa).

Residues 1–17 (MMWKTVLITIFAAGVLA) form the signal peptide. N-linked (GlcNAc...) asparagine glycosylation is found at Asn-118 and Asn-173.

It belongs to the UPF0408 family. Expressed in the subesophageal body, fat bodies, hemocytes, midgut and Malpighian tubules. Not expressed in silk glands.

It is found in the secreted. The chain is 27 kDa glycoprotein from Bombyx mori (Silk moth).